The sequence spans 484 residues: Glucan endo-1,3-beta-glucosidase 5 (484 aa).

An N-terminal signal peptide occupies residues 1-26; it reads MLFKGVFAVFFVITLLYASLLIEVEG. An N-linked (GlcNAc...) asparagine glycan is attached at asparagine 102. The active-site Proton donor is glutamate 122. 2 N-linked (GlcNAc...) asparagine glycosylation sites follow: asparagine 129 and asparagine 260. The active-site Nucleophile is the glutamate 267. An intrachain disulfide couples cysteine 366 to cysteine 428. A glycan (N-linked (GlcNAc...) asparagine) is linked at asparagine 409. A lipid anchor (GPI-anchor amidated alanine) is attached at alanine 460. Positions 461–484 are cleaved as a propeptide — removed in mature form; sequence SAMMPITRSTAVLLLLSICLYIVL.

The protein belongs to the glycosyl hydrolase 17 family. Post-translationally, contains two additional disulfide bonds.

Its subcellular location is the cell membrane. It catalyses the reaction Hydrolysis of (1-&gt;3)-beta-D-glucosidic linkages in (1-&gt;3)-beta-D-glucans.. The sequence is that of Glucan endo-1,3-beta-glucosidase 5 from Arabidopsis thaliana (Mouse-ear cress).